The primary structure comprises 483 residues: MIPVILSGGSGSRLWPLSRKQFPKQFLALTGEHTLFQQTLERLVFEGMDTPIVVCNKDHRFIVNEQLANRKLECQRILMEPFGRNTAPAVALTAMMLVNEGRDELMLVLPADHVIDDQKALQRALALATVAAERGEMVLFGVPATRPETGYGYIKSTNDSLLPEGVSRVQQFVEKPDEKRAVEFVKSGGYFWNSGMFLFRASRFLEELKKHDPDIYDTCVLTLERSEQTADTVTLDDATFACCPDNSIDYAVMEKTQRACVVPLSAGWSDVGCWASLWAVNDKDIHGNVSKGDVVIQDSRNCMIHGNGKLVSVIGLDNIVVVETKDAMMIAHKDKVQGVKQMVSTLNDQGRSETQNHCEVYRPWGSYDSVDMGGRFQVKHISVKPGACLSLQMHHHRAEHWIVVSGTAEVTCDENVFLLTENQSTYIPIASVHRLRNPGKIPLEIIEVQSGSYLGEDDIERFEDIYGRSTPVERGVSVKTIAQ.

It belongs to the mannose-6-phosphate isomerase type 2 family. In terms of assembly, monomer. The cofactor is Co(2+).

The enzyme catalyses D-mannose 6-phosphate = D-fructose 6-phosphate. It carries out the reaction alpha-D-mannose 1-phosphate + GTP + H(+) = GDP-alpha-D-mannose + diphosphate. Its pathway is nucleotide-sugar biosynthesis; GDP-alpha-D-mannose biosynthesis; GDP-alpha-D-mannose from alpha-D-mannose 1-phosphate (GTP route): step 1/1. It functions in the pathway nucleotide-sugar biosynthesis; GDP-alpha-D-mannose biosynthesis; alpha-D-mannose 1-phosphate from D-fructose 6-phosphate: step 1/2. Functionally, produces a precursor for alginate polymerization. The alginate layer provides a protective barrier against host immune defenses and antibiotics. The polypeptide is Alginate biosynthesis protein AlgA (algA) (Pseudomonas fluorescens).